The sequence spans 232 residues: 2,3-bisphosphoglycerate-dependent phosphoglycerate mutase (232 aa).

Substrate-binding positions include 10 to 17, 23 to 24, Arg62, 89 to 92, Lys100, 116 to 117, and 186 to 187; these read RHGESQWN, TG, ERHY, RR, and GN. Catalysis depends on His11, which acts as the Tele-phosphohistidine intermediate. The active-site Proton donor/acceptor is Glu89.

This sequence belongs to the phosphoglycerate mutase family. BPG-dependent PGAM subfamily. As to quaternary structure, homodimer.

It catalyses the reaction (2R)-2-phosphoglycerate = (2R)-3-phosphoglycerate. The protein operates within carbohydrate degradation; glycolysis; pyruvate from D-glyceraldehyde 3-phosphate: step 3/5. Its function is as follows. Catalyzes the interconversion of 2-phosphoglycerate and 3-phosphoglycerate. The polypeptide is 2,3-bisphosphoglycerate-dependent phosphoglycerate mutase (Blochmanniella pennsylvanica (strain BPEN)).